We begin with the raw amino-acid sequence, 122 residues long: Large ribosomal subunit protein uL14c (122 aa).

The protein belongs to the universal ribosomal protein uL14 family. In terms of assembly, part of the 50S ribosomal subunit.

It is found in the plastid. The protein resides in the chloroplast. Its function is as follows. Binds to 23S rRNA. This Calycanthus floridus var. glaucus (Eastern sweetshrub) protein is Large ribosomal subunit protein uL14c.